The primary structure comprises 180 residues: Hypoxanthine-guanine phosphoribosyltransferase (180 aa).

Diphosphate is bound by residues Lys43 and Gly44. Mg(2+) contacts are provided by Glu99 and Asp100. Asp103 functions as the Proton acceptor in the catalytic mechanism. GMP-binding positions include Lys131, 152 to 153 (FI), and Asp159. Position 165 (Arg165) interacts with diphosphate.

Belongs to the purine/pyrimidine phosphoribosyltransferase family. The cofactor is Mg(2+).

The protein localises to the cytoplasm. The catalysed reaction is IMP + diphosphate = hypoxanthine + 5-phospho-alpha-D-ribose 1-diphosphate. The enzyme catalyses GMP + diphosphate = guanine + 5-phospho-alpha-D-ribose 1-diphosphate. It participates in purine metabolism; IMP biosynthesis via salvage pathway; IMP from hypoxanthine: step 1/1. Its pathway is purine metabolism; GMP biosynthesis via salvage pathway; GMP from guanine: step 1/1. Functionally, purine salvage pathway enzyme that catalyzes the transfer of the ribosyl-5-phosphate group from 5-phospho-alpha-D-ribose 1-diphosphate (PRPP) to the N9 position of the 6-oxopurines hypoxanthine and guanine to form the corresponding ribonucleotides IMP (inosine 5'-monophosphate) and GMP (guanosine 5'-monophosphate), with the release of PPi. The polypeptide is Hypoxanthine-guanine phosphoribosyltransferase (hpt) (Streptococcus thermophilus (strain CNRZ 1066)).